A 128-amino-acid polypeptide reads, in one-letter code: Large ribosomal subunit protein bL17 (128 aa).

It belongs to the bacterial ribosomal protein bL17 family. Part of the 50S ribosomal subunit. Contacts protein L32.

This chain is Large ribosomal subunit protein bL17, found in Streptococcus uberis (strain ATCC BAA-854 / 0140J).